The sequence spans 348 residues: 3-keto-steroid reductase (348 aa).

NADP(+) is bound by residues leucine 18, threonine 41, and arginine 47. Residues serine 180 and tyrosine 203 each act as proton donor in the active site. 3 residues coordinate NADP(+): tyrosine 203, lysine 207, and serine 238. Lysine 207 acts as the Lowers pKa of active site Tyr in catalysis.

Belongs to the short-chain dehydrogenases/reductases (SDR) family. ERG27 subfamily.

The enzyme catalyses a 3beta-hydroxysteroid + NADP(+) = a 3-oxosteroid + NADPH + H(+). Its pathway is steroid biosynthesis; zymosterol biosynthesis; zymosterol from lanosterol: step 5/6. Responsible for the reduction of the keto group on the C-3 of sterols. In Candida glabrata (strain ATCC 2001 / BCRC 20586 / JCM 3761 / NBRC 0622 / NRRL Y-65 / CBS 138) (Yeast), this protein is 3-keto-steroid reductase (ERG27).